We begin with the raw amino-acid sequence, 313 residues long: Pyrimidine-specific ribonucleoside hydrolase RihA (313 aa).

His240 is an active-site residue.

It belongs to the IUNH family. RihA subfamily.

Functionally, hydrolyzes cytidine or uridine to ribose and cytosine or uracil, respectively. In Enterobacter sp. (strain 638), this protein is Pyrimidine-specific ribonucleoside hydrolase RihA.